The following is a 178-amino-acid chain: Platelet inhibitor triplatin-2 (178 aa).

Residues 1-18 form the signal peptide; it reads MKMIISLTFLGILMLAFA. Disulfide bonds link Cys25-Cys134, Cys60-Cys178, and Cys90-Cys106.

The protein belongs to the calycin superfamily. Triabin family. Expressed in salivary glands.

It localises to the secreted. Functionally, inhibits platelet aggregation and vasoconstriction through binding to distinct eicosanoids involved in inflammation (acts as a scavenger), and has a role in inhibiting host innate immunity by impairing platelet-assisted formation of neutrophil extracellular traps (NETs). Inhibits platelet aggregation by collagen, and low doses of thromboxane A2 mimetic (TXA2 mimetic), and arachidonic acid (AA) without affecting aggregation induced by ADP, convulxin (GP6 agonist), and PMA. Binds to TXA2, TXB2, prostaglandine H2 mimetic (PGH2 mimetic), PGJ2, and PGF2alpha. Binding is not observed to leukotrienes, AA, and biogenic amines (PGE1, 5(S)-HETE, 12(S)-HETE, 20-HETE, norepinephrine, epinephrine, serotonin, LTC4 and ADP). Induces relaxation of aorta rat previously contracted with TXA2 mimetic. Moreover, it also impairs platelet-assisted formation of neutrophil extracellular traps (NETs). NETs are web-like structures of DNA and proteins that play an important role in killing of pathogens. In addition, NETs are implicated in thrombus formation. In vivo, this protein exhibits antithrombotic activity in two distinct mice models that are highly dependent on platelets. It is noteworthy that it inhibits thrombosis without promoting excessive bleeding. The chain is Platelet inhibitor triplatin-2 from Triatoma infestans (Assassin bug).